The primary structure comprises 34 residues: Kappa-theraphotoxin-Scg1a (34 aa).

3 disulfides stabilise this stretch: cysteine 2–cysteine 16, cysteine 9–cysteine 21, and cysteine 15–cysteine 28. An involved in active face region spans residues 4–6; that stretch reads YLF.

The protein belongs to the neurotoxin 10 (Hwtx-1) family. 09 (HaTx) subfamily. As to expression, expressed by the venom gland.

The protein resides in the secreted. Its function is as follows. Reversibly inhibits potassium currents in oocytes expressing Kv2.1/KCNB1 channels (Kd=2.7 uM). Acts by shifting activation of the channel to more depolarized voltages. The toxin may bind to the S3b-S4 helices of the voltage sensor paddle. One, two, three or four toxin molecules may bind the Kv2.1/KCNB1 channel. It shows low to moderate affinity for lipid bilayers. It partitions into the bilayer membrane, where it stabilizes at the water/membrane interface. This Stromatopelma calceatum griseipes (Feather leg baboon tarantula) protein is Kappa-theraphotoxin-Scg1a.